The primary structure comprises 262 residues: Matrilysin (262 aa).

Positions 1-12 (LCVLCLLPQSPA) are cleaved as a signal peptide. The propeptide at 13–89 (LPLPREAGGH…PRCGLPDTGE (77 aa)) is activation peptide. Positions 80-87 (PRCGLPDT) match the Cysteine switch motif. Cys82 serves as a coordination point for Zn(2+). Residue Asp148 coordinates Ca(2+). Residues His158 and Asp160 each coordinate Zn(2+). 4 residues coordinate Ca(2+): Asp165, Gly166, Gly168, and Thr170. His173 provides a ligand contact to Zn(2+). Ca(2+) contacts are provided by Gly180, Gly182, and Asp184. Position 186 (His186) interacts with Zn(2+). Positions 188 and 191 each coordinate Ca(2+). His209 provides a ligand contact to Zn(2+). The active site involves Glu210. Residues His213 and His219 each coordinate Zn(2+).

This sequence belongs to the peptidase M10A family. Ca(2+) serves as cofactor. Requires Zn(2+) as cofactor.

It localises to the secreted. The protein localises to the extracellular space. It is found in the extracellular matrix. The catalysed reaction is Cleavage of 14-Ala-|-Leu-15 and 16-Tyr-|-Leu-17 in B chain of insulin. No action on collagen types I, II, IV, V. Cleaves gelatin chain alpha2(I) &gt; alpha1(I).. Degrades casein, gelatins of types I, III, IV, and V, and fibronectin. Activates procollagenase. The protein is Matrilysin (MMP7) of Felis catus (Cat).